Consider the following 211-residue polypeptide: MRLRKKWWARPEMEASNLTIINPSLFKGKWKDEFKNDGEIYLELGCGRGKFLCTQALNNKHINYIGIDLKDEVLIYALKKVVEAEAENIRIIPMNISKIENVFDRDEVGRIYINFCNPWPKRRQKKRRLTHTGFLNIYKKFLKPKSEVWFKTDDRGLFEESQEYFVESGFSIDYITYDLHDSGFTDNVVTEYEEKFTNLGMKTMFLIARIV.

Residues Glu-43, Asp-68, Asn-95, and Asn-117 each coordinate S-adenosyl-L-methionine. Substrate is bound by residues Lys-121, Asp-153, and Thr-190–Glu-193.

Belongs to the class I-like SAM-binding methyltransferase superfamily. TrmB family.

It catalyses the reaction guanosine(46) in tRNA + S-adenosyl-L-methionine = N(7)-methylguanosine(46) in tRNA + S-adenosyl-L-homocysteine. Its pathway is tRNA modification; N(7)-methylguanine-tRNA biosynthesis. Functionally, catalyzes the formation of N(7)-methylguanine at position 46 (m7G46) in tRNA. The polypeptide is tRNA (guanine-N(7)-)-methyltransferase (Clostridium kluyveri (strain ATCC 8527 / DSM 555 / NBRC 12016 / NCIMB 10680 / K1)).